Here is a 553-residue protein sequence, read N- to C-terminus: LIM domain-containing protein B (553 aa).

Residues 43–115 (LTYKDPNVST…SINNNISNNN (73 aa)) form a disordered region. The span at 99–114 (GPGLPNNSINNNISNN) shows a compositional bias: low complexity. LIM zinc-binding domains lie at 205–262 (PICG…ELFS), 263–322 (PRCF…RQKR), 328–387 (EICS…KQIL), 388–447 (NICG…FFGR), and 448–505 (QCFK…LPKE). Positions 534–553 (ELKKERERAAKEKEKESKAK) are disordered.

Its subcellular location is the cytoplasm. The protein localises to the cell cortex. It is found in the cytoskeleton. Its function is as follows. Regulates and controls rearrangements of the actin cytoskeleton. Required for tip formation, morphogenesis, cell adhesion and motility, chemotaxis and aggregates formation. May function downstream of paxB. This Dictyostelium discoideum (Social amoeba) protein is LIM domain-containing protein B (limB).